Reading from the N-terminus, the 367-residue chain is NADH-quinone oxidoreductase subunit D (367 aa).

It belongs to the complex I 49 kDa subunit family. As to quaternary structure, NDH-1 is composed of 14 different subunits. Subunits NuoB, C, D, E, F, and G constitute the peripheral sector of the complex.

It is found in the cell membrane. The enzyme catalyses a quinone + NADH + 5 H(+)(in) = a quinol + NAD(+) + 4 H(+)(out). NDH-1 shuttles electrons from NADH, via FMN and iron-sulfur (Fe-S) centers, to quinones in the respiratory chain. The immediate electron acceptor for the enzyme in this species is believed to be ubiquinone. Couples the redox reaction to proton translocation (for every two electrons transferred, four hydrogen ions are translocated across the cytoplasmic membrane), and thus conserves the redox energy in a proton gradient. In Dehalococcoides mccartyi (strain CBDB1), this protein is NADH-quinone oxidoreductase subunit D.